A 984-amino-acid chain; its full sequence is Rhoptry neck protein 4 (984 aa).

Residues 1–26 (MAIKNTLTGSGLLVLLTLACGTTVQS) form the signal peptide. Residues 24–300 (VQSSPPTPAP…TPIPASKGIY (277 aa)) form a disordered region. Composition is skewed to polar residues over residues 66–85 (PQKT…NSKV) and 92–105 (SDTT…TSES). The N-linked (GlcNAc...) asparagine glycan is linked to Asn81. Over residues 106–117 (PPVPQLGTPPRP) the composition is skewed to pro residues. Residues 129–172 (QPPTAAPRTSRSVDTGSGSDASTEQQAGGQKVVTPIPASKGIYP) form repeat 1. Residues 135-156 (PRTSRSVDTGSGSDASTEQQAG) show a composition bias toward polar residues. A compositionally biased stretch (basic residues) spans 214–228 (TGRRRAKARNRKRHP). Over residues 242 to 285 (QPPTTASRPSNGEGESQPPTAAPRTSRSVDTGSGSDASTEQQAG) the composition is skewed to polar residues. The stretch at 258-301 (QPPTAAPRTSRSVDTGSGSDASTEQQAGGQKVVTPIPASKGIYP) is repeat 2. Asn390 and Asn780 each carry an N-linked (GlcNAc...) asparagine glycan. Residues 882 to 984 (GPTVSDESRR…EESTSKTSEL (103 aa)) form a disordered region. The span at 892-901 (MIHPVRHRSR) shows a compositional bias: basic residues. The span at 902–914 (TAPSSEAASTAAE) shows a compositional bias: low complexity. Asn925 is a glycosylation site (N-linked (GlcNAc...) asparagine). The span at 967-984 (LKQSDTLIEESTSKTSEL) shows a compositional bias: polar residues.

Its subcellular location is the secreted. The protein resides in the parasitophorous vacuole membrane. This Toxoplasma gondii protein is Rhoptry neck protein 4 (RON4).